Reading from the N-terminus, the 370-residue chain is L-lysine 4-hydroxylase (370 aa).

Positions 176, 178, and 310 each coordinate Fe cation.

Belongs to the clavaminate synthase family. Requires Fe(2+) as cofactor.

It carries out the reaction L-lysine + 2-oxoglutarate + O2 = (4R)-4-hydroxy-L-lysine + succinate + CO2. In terms of biological role, alpha-ketoglutarate-dependent dioxygenase that in vitro catalyzes the regio- and stereoselective hydroxylation of L-lysine, leading to (4R)-4-hydroxy-L-lysine. To a lesser extent, can also use (3S)-3-hydroxy-L-lysine as substrate, producing the dihydroxylated product (3R,4R)-3,4-hydroxy-L-lysine. Cannot use D-lysine or L-ornithine as substrate. The protein is L-lysine 4-hydroxylase of Flavobacterium johnsoniae (strain ATCC 17061 / DSM 2064 / JCM 8514 / BCRC 14874 / CCUG 350202 / NBRC 14942 / NCIMB 11054 / UW101) (Cytophaga johnsonae).